The following is a 31-amino-acid chain: LCSREGEFCYKLRKCCAGFYCKAFVLHCYRN.

3 cysteine pairs are disulfide-bonded: cysteine 2–cysteine 16, cysteine 9–cysteine 21, and cysteine 15–cysteine 28.

Belongs to the neurotoxin 10 (Hwtx-1) family. Expressed by the venom gland.

It is found in the secreted. Functionally, probable ion channel inhibitor. The polypeptide is Jingzhaotoxin F7-15.33 (Chilobrachys guangxiensis (Chinese earth tiger tarantula)).